We begin with the raw amino-acid sequence, 514 residues long: Putative thymidine phosphorylase (514 aa).

This sequence belongs to the thymidine/pyrimidine-nucleoside phosphorylase family. Type 2 subfamily.

The catalysed reaction is thymidine + phosphate = 2-deoxy-alpha-D-ribose 1-phosphate + thymine. This is Putative thymidine phosphorylase from Rhodopseudomonas palustris (strain ATCC BAA-98 / CGA009).